Consider the following 617-residue polypeptide: V-type proton ATPase catalytic subunit A (617 aa).

Residue G257–T264 participates in ATP binding.

It belongs to the ATPase alpha/beta chains family. V-ATPase is a heteromultimeric enzyme composed of a peripheral catalytic V1 complex (components A to H) attached to an integral membrane V0 proton pore complex (components: a, c, c', c'', d, e, f and VOA1).

Its subcellular location is the vacuole membrane. The enzyme catalyses ATP + H2O + 4 H(+)(in) = ADP + phosphate + 5 H(+)(out). Its function is as follows. Catalytic subunit of the V1 complex of vacuolar(H+)-ATPase (V-ATPase), a multisubunit enzyme composed of a peripheral complex (V1) that hydrolyzes ATP and a membrane integral complex (V0) that translocates protons. V-ATPase is responsible for acidifying and maintaining the pH of intracellular compartments. The protein is V-type proton ATPase catalytic subunit A (VMA1) of Eremothecium gossypii (strain ATCC 10895 / CBS 109.51 / FGSC 9923 / NRRL Y-1056) (Yeast).